The primary structure comprises 85 residues: UPF0297 protein Cbei_1105 (85 aa).

It belongs to the UPF0297 family.

This Clostridium beijerinckii (strain ATCC 51743 / NCIMB 8052) (Clostridium acetobutylicum) protein is UPF0297 protein Cbei_1105.